The sequence spans 147 residues: Lysozyme C, intestinal isozyme (147 aa).

The N-terminal stretch at 1–18 (MKAVLILGLLLLSVTVQG) is a signal peptide. The C-type lysozyme domain occupies 19–147 (KKFEKCELAR…VSSYIRGCKL (129 aa)). Disulfide bonds link cysteine 24–cysteine 145, cysteine 48–cysteine 133, cysteine 83–cysteine 99, and cysteine 95–cysteine 113. Catalysis depends on residues glutamate 53 and aspartate 71.

Belongs to the glycosyl hydrolase 22 family.

The enzyme catalyses Hydrolysis of (1-&gt;4)-beta-linkages between N-acetylmuramic acid and N-acetyl-D-glucosamine residues in a peptidoglycan and between N-acetyl-D-glucosamine residues in chitodextrins.. Lysozymes have primarily a bacteriolytic function; those in tissues and body fluids are associated with the monocyte-macrophage system and enhance the activity of immunoagents. The chain is Lysozyme C, intestinal isozyme from Bos taurus (Bovine).